A 60-amino-acid polypeptide reads, in one-letter code: Cytotoxin 10 (60 aa).

4 disulfide bridges follow: C3–C21, C14–C38, C42–C53, and C54–C59.

This sequence belongs to the three-finger toxin family. Short-chain subfamily. Type IA cytotoxin sub-subfamily. As to quaternary structure, monomer in solution; Homodimer and oligomer in the presence of negatively charged lipids forming a pore with a size ranging between 20 and 30 Angstroms. As to expression, expressed by the venom gland.

It is found in the secreted. It localises to the target cell membrane. Shows cytolytic activity on many different cells by forming pore in lipid membranes. In vivo, increases heart rate or kills the animal by cardiac arrest. In addition, it binds to heparin with high affinity, interacts with Kv channel-interacting protein 1 (KCNIP1) in a calcium-independent manner, and binds to integrin alpha-V/beta-3 (ITGAV/ITGB3) with moderate affinity. In Naja annulifera (Banded Egyptian cobra), this protein is Cytotoxin 10.